The primary structure comprises 434 residues: Methylenetetrahydrofolate--tRNA-(uracil-5-)-methyltransferase TrmFO (434 aa).

9–14 lines the FAD pocket; sequence GAGLAG.

The protein belongs to the MnmG family. TrmFO subfamily. FAD serves as cofactor.

The protein localises to the cytoplasm. The catalysed reaction is uridine(54) in tRNA + (6R)-5,10-methylene-5,6,7,8-tetrahydrofolate + NADH + H(+) = 5-methyluridine(54) in tRNA + (6S)-5,6,7,8-tetrahydrofolate + NAD(+). It carries out the reaction uridine(54) in tRNA + (6R)-5,10-methylene-5,6,7,8-tetrahydrofolate + NADPH + H(+) = 5-methyluridine(54) in tRNA + (6S)-5,6,7,8-tetrahydrofolate + NADP(+). Functionally, catalyzes the folate-dependent formation of 5-methyl-uridine at position 54 (M-5-U54) in all tRNAs. This is Methylenetetrahydrofolate--tRNA-(uracil-5-)-methyltransferase TrmFO from Bacillus pumilus (strain SAFR-032).